The chain runs to 253 residues: uncharacterized protein (253 aa).

NADP(+) is bound by residues Ile17, Ser36, Asp62, Asn89, Tyr158, Lys162, Val191, and Thr193. Catalysis depends on Tyr158, which acts as the Proton donor. The Lowers pKa of active site Tyr role is filled by Lys162.

The protein belongs to the short-chain dehydrogenases/reductases (SDR) family.

The protein resides in the cytoplasm. It localises to the nucleus. This is an uncharacterized protein from Schizosaccharomyces pombe (strain 972 / ATCC 24843) (Fission yeast).